A 207-amino-acid chain; its full sequence is Outer-membrane lipoprotein LolB (207 aa).

A signal peptide spans 1-21 (MPLPDFRFIRLLPLAALVLTA). A lipid anchor (N-palmitoyl cysteine) is attached at Cys-22. The S-diacylglycerol cysteine moiety is linked to residue Cys-22.

Belongs to the LolB family. In terms of assembly, monomer.

It is found in the cell outer membrane. In terms of biological role, plays a critical role in the incorporation of lipoproteins in the outer membrane after they are released by the LolA protein. This Escherichia coli O6:H1 (strain CFT073 / ATCC 700928 / UPEC) protein is Outer-membrane lipoprotein LolB.